Consider the following 352-residue polypeptide: NAD(P)H oxidoreductase RTN4IP1, mitochondrial (352 aa).

Residues 11–348 (ESLDLLEYKT…NSNSNGKIII (338 aa)) form the Enoyl reductase (ER) domain. The NADPH site is built by Val165, Tyr206, Ala296, and Phe298.

The protein belongs to the zinc-containing alcohol dehydrogenase family. Quinone oxidoreductase subfamily.

It localises to the mitochondrion matrix. The catalysed reaction is a quinone + NADH + H(+) = a quinol + NAD(+). The enzyme catalyses a quinone + NADPH + H(+) = a quinol + NADP(+). The protein operates within cofactor biosynthesis; ubiquinone biosynthesis. NAD(P)H oxidoreductase involved in the ubiquinone biosynthetic pathway. Required for the O-methyltransferase activity of coq3. The polypeptide is NAD(P)H oxidoreductase RTN4IP1, mitochondrial (rtn4ip1) (Dictyostelium discoideum (Social amoeba)).